The sequence spans 333 residues: Dehydrodolichyl diphosphate synthase complex subunit Dhdds (333 aa).

The (2E,6E)-farnesyl diphosphate site is built by aspartate 34, glycine 35, arginine 37, arginine 38, and arginine 85. Aspartate 34 serves as a coordination point for Mg(2+). Isopentenyl diphosphate contacts are provided by arginine 38, arginine 85, arginine 205, arginine 211, and serine 213.

The protein belongs to the UPP synthase family. In terms of assembly, the active dehydrodolichyl diphosphate synthase complex is a heterotetramer composed of a dimer of heterodimer of DHDDS and NUS1. Interacts with NPC2. It depends on Mg(2+) as a cofactor.

The protein resides in the endoplasmic reticulum membrane. The catalysed reaction is n isopentenyl diphosphate + (2E,6E)-farnesyl diphosphate = a di-trans,poly-cis-polyprenyl diphosphate + n diphosphate. The protein operates within protein modification; protein glycosylation. It functions in the pathway lipid metabolism. With NUS1, forms the dehydrodolichyl diphosphate synthase (DDS) complex, an essential component of the dolichol monophosphate (Dol-P) biosynthetic machinery. Both subunits contribute to enzymatic activity, i.e. condensation of multiple copies of isopentenyl pyrophosphate (IPP) to farnesyl pyrophosphate (FPP) to produce dehydrodolichyl diphosphate (Dedol-PP), a precursor of dolichol phosphate which is utilized as a sugar carrier in protein glycosylation in the endoplasmic reticulum (ER). Synthesizes long-chain polyprenols, mostly of C95 and C100 chain length. Regulates the glycosylation and stability of nascent NPC2, thereby promoting trafficking of LDL-derived cholesterol. The chain is Dehydrodolichyl diphosphate synthase complex subunit Dhdds from Mus musculus (Mouse).